The sequence spans 200 residues: Transcriptional repressor NrdR (200 aa).

The segment at 3–34 (CPRCGKQEIRVLESRSAEGGQSVRRRRECMSC) is a zinc-finger region. The region spanning 49–139 (IMVIKRDGSR…VYRKFQGIKD (91 aa)) is the ATP-cone domain. A disordered region spans residues 158–200 (LERPLRNSPPSESESTASPDWVGGIPQLLDQNDTSSNLSEIPK). The span at 186 to 200 (LDQNDTSSNLSEIPK) shows a compositional bias: polar residues.

It belongs to the NrdR family. Requires Zn(2+) as cofactor.

Functionally, negatively regulates transcription of bacterial ribonucleotide reductase nrd genes and operons by binding to NrdR-boxes. This Synechococcus sp. (strain JA-3-3Ab) (Cyanobacteria bacterium Yellowstone A-Prime) protein is Transcriptional repressor NrdR.